The sequence spans 534 residues: Chaperonin GroEL 3 (534 aa).

Residues Thr-31–Pro-34, Gly-416, Asn-479–Leu-481, and Asp-495 contribute to the ATP site.

It belongs to the chaperonin (HSP60) family. In terms of assembly, forms a cylinder of 14 subunits composed of two heptameric rings stacked back-to-back. Interacts with the co-chaperonin GroES.

The protein localises to the cytoplasm. It carries out the reaction ATP + H2O + a folded polypeptide = ADP + phosphate + an unfolded polypeptide.. Functionally, together with its co-chaperonin GroES, plays an essential role in assisting protein folding. The GroEL-GroES system forms a nano-cage that allows encapsulation of the non-native substrate proteins and provides a physical environment optimized to promote and accelerate protein folding. The sequence is that of Chaperonin GroEL 3 from Protochlamydia amoebophila (strain UWE25).